The chain runs to 397 residues: MQKKTLSDITIQGKRVLMRVDFNVPLDEEKNITDDKRIVEALPSIKKIIENGGRLILMSHLGRPKGKPNQDFSLTPAAERLSELLDCPVIMAGDCIGTEVMQQVLALQDGEVIMLENLRFHPEEEANDPDFAKELASLGEIYVNDAFGTAHRAHASTEGITRYVQTAVAGYLIEKELMYLGKALQEPERPFVAILGGSKISGKIDVLENLFNKVDTVLIGGAMVFTFFKAQGLGTGNSLVEENKLELALSLIEQAARKNIKLLLPQDIIIAPEISADAESMAVAVNAIPDGMIGVDIGPETRAAYRQEILGARTVLWNGPMGVFEIDRFAEGTIAIAEAMADATAAGATTIIGGGDSAAAVAKAGLADQITHISTGGGASLEFLEGKELPGIAALND.

Substrate contacts are provided by residues 21-23 (DFN), arginine 37, 60-63 (HLGR), arginine 119, and arginine 152. Residues lysine 203, glycine 294, glutamate 325, and 354–357 (GGDS) each bind ATP.

Belongs to the phosphoglycerate kinase family. In terms of assembly, monomer.

The protein localises to the cytoplasm. The enzyme catalyses (2R)-3-phosphoglycerate + ATP = (2R)-3-phospho-glyceroyl phosphate + ADP. It functions in the pathway carbohydrate degradation; glycolysis; pyruvate from D-glyceraldehyde 3-phosphate: step 2/5. The polypeptide is Phosphoglycerate kinase (Chlorobium limicola (strain DSM 245 / NBRC 103803 / 6330)).